The primary structure comprises 184 residues: MGLEEQLPGGILLSTVEKVAGYVRKNSLWPATFGLACCAIEMMATAGPRFDIARFGMERFSATPRQADLMIVAGRVSQKMAPVLRQIYDQMAEPKWVLAMGVCASSGGMFNNYAIVQGVDHVVPVDIYLPGCPPRPEMLLHAILKLHEKIQQMPLGINRERAIAEAEEAALLARPTIEMRGLLR.

C37, C38, C103, and C132 together coordinate [4Fe-4S] cluster.

The protein belongs to the complex I 20 kDa subunit family. As to quaternary structure, NDH-1 is composed of 14 different subunits. Subunits NuoB, C, D, E, F, and G constitute the peripheral sector of the complex. [4Fe-4S] cluster is required as a cofactor.

The protein localises to the cell membrane. It catalyses the reaction a quinone + NADH + 5 H(+)(in) = a quinol + NAD(+) + 4 H(+)(out). Its function is as follows. NDH-1 shuttles electrons from NADH, via FMN and iron-sulfur (Fe-S) centers, to quinones in the respiratory chain. The immediate electron acceptor for the enzyme in this species is believed to be a menaquinone. Couples the redox reaction to proton translocation (for every two electrons transferred, four hydrogen ions are translocated across the cytoplasmic membrane), and thus conserves the redox energy in a proton gradient. The polypeptide is NADH-quinone oxidoreductase subunit B (Mycobacterium bovis (strain BCG / Pasteur 1173P2)).